Here is a 100-residue protein sequence, read N- to C-terminus: NADH-quinone oxidoreductase subunit K (100 aa).

The next 3 helical transmembrane spans lie at L4–I24, L28–V48, and V60–L80.

Belongs to the complex I subunit 4L family. As to quaternary structure, NDH-1 is composed of 13 different subunits. Subunits NuoA, H, J, K, L, M, N constitute the membrane sector of the complex.

The protein resides in the cell inner membrane. The enzyme catalyses a quinone + NADH + 5 H(+)(in) = a quinol + NAD(+) + 4 H(+)(out). In terms of biological role, NDH-1 shuttles electrons from NADH, via FMN and iron-sulfur (Fe-S) centers, to quinones in the respiratory chain. The immediate electron acceptor for the enzyme in this species is believed to be ubiquinone. Couples the redox reaction to proton translocation (for every two electrons transferred, four hydrogen ions are translocated across the cytoplasmic membrane), and thus conserves the redox energy in a proton gradient. In Shigella sonnei (strain Ss046), this protein is NADH-quinone oxidoreductase subunit K.